Consider the following 312-residue polypeptide: Mas-related G-protein coupled receptor member B3 (312 aa).

Topologically, residues 1-31 are extracellular; that stretch reads MALRTSLITTTAPDKTSLPISICIIKFQVMN. Residues 32–52 form a helical membrane-spanning segment; that stretch reads LLSITISPVGMVLNIIVLWFL. At 53 to 67 the chain is on the cytoplasmic side; that stretch reads GFQICRNAFSAYILN. The helical transmembrane segment at 68–88 threads the bilayer; that stretch reads LAVADFLFLCSHSIFSFLIVC. The Extracellular segment spans residues 89-106; it reads KLHYFLFYIRQLLDTVTM. Residues 107 to 127 traverse the membrane as a helical segment; it reads FAYVFGLSITTIISIECCLSI. Over 128 to 140 the chain is Cytoplasmic; it reads MWPIWYHCQRPRH. Residues 141 to 161 traverse the membrane as a helical segment; the sequence is TSAVICVLLWALSLLFPALQM. Topologically, residues 162-180 are extracellular; it reads EKCSVLFNTFEYSWCGIIN. A helical transmembrane segment spans residues 181–201; that stretch reads IISGAWLVVLFVVLCGFSLIL. The Cytoplasmic segment spans residues 202 to 220; that stretch reads LLRISCGSQQIPVTRLNVT. A helical transmembrane segment spans residues 221–241; it reads IALRVLLLLIFGIPFGIFWIV. At 242–259 the chain is on the extracellular side; sequence DKWNEENFFVRACGFSHH. A helical transmembrane segment spans residues 260–280; sequence ILYVYCINICVNATIYFLVGS. Residues 281–312 are Cytoplasmic-facing; it reads IRHGKFQKMTLKLILQRAIQGTPEEEGGERGP.

It belongs to the G-protein coupled receptor 1 family. Mas subfamily.

It localises to the membrane. Its function is as follows. Orphan receptor. Probably involved in the function of nociceptive neurons. May regulate nociceptor function and/or development, including the sensation or modulation of pain. This Mus musculus (Mouse) protein is Mas-related G-protein coupled receptor member B3 (Mrgprb3).